The sequence spans 479 residues: F-box protein At5g51380 (479 aa).

The tract at residues 1-20 is disordered; sequence MTFREKMPTSPKSPLRRRRS. Positions 62-108 constitute an F-box domain; that stretch reads DRTLSLSDSLLLKILEKLPESQNEDVSLVCKRWLSVQGRRLRSMKVF.

The polypeptide is F-box protein At5g51380 (Arabidopsis thaliana (Mouse-ear cress)).